Consider the following 249-residue polypeptide: Isoprenyl transferase (249 aa).

Aspartate 29 is an active-site residue. Aspartate 29 lines the Mg(2+) pocket. Residues 30-33 (GNGR), tryptophan 34, arginine 42, histidine 46, and 74-76 (STE) each bind substrate. Residue asparagine 77 is the Proton acceptor of the active site. Substrate is bound by residues tryptophan 78, arginine 80, arginine 197, and 203 to 205 (RLS). Glutamate 216 lines the Mg(2+) pocket.

It belongs to the UPP synthase family. In terms of assembly, homodimer. It depends on Mg(2+) as a cofactor.

Catalyzes the condensation of isopentenyl diphosphate (IPP) with allylic pyrophosphates generating different type of terpenoids. The polypeptide is Isoprenyl transferase (Trichormus variabilis (strain ATCC 29413 / PCC 7937) (Anabaena variabilis)).